The primary structure comprises 859 residues: Leucine--tRNA ligase (859 aa).

A 'HIGH' region motif is present at residues 42–52; the sequence is PYPSGRLHMGH. The 'KMSKS' region signature appears at 618–622; the sequence is KMSKS. Lys-621 is an ATP binding site.

The protein belongs to the class-I aminoacyl-tRNA synthetase family.

The protein resides in the cytoplasm. It catalyses the reaction tRNA(Leu) + L-leucine + ATP = L-leucyl-tRNA(Leu) + AMP + diphosphate. The protein is Leucine--tRNA ligase of Shewanella amazonensis (strain ATCC BAA-1098 / SB2B).